The following is a 325-amino-acid chain: MTDVSRKIRAWGRRLMIGTAAAVVLPGLVGLAGGAATAGAFSRPGLPVEYLQVPSPSMGRDIKVQFQSGGNNSPAVYLLDGLRAQDDYNGWDINTPAFEWYYQSGLSIVMPVGGQSSFYSDWYSPACGKAGCQTYKWETFLTSELPQWLSANRAVKPTGSAAIGLSMAGSSAMILAAYHPQQFIYAGSLSALLDPSQGMGPSLIGLAMGDAGGYKAADMWGPSSDPAWERNDPTQQIPKLVANNTRLWVYCGNGTPNELGGANIPAEFLENFVRSSNLKFQDAYNAAGGHNAVFNFPPNGTHSWEYWGAQLNAMKGDLQSSLGAG.

The first 40 residues, 1-40 (MTDVSRKIRAWGRRLMIGTAAAVVLPGLVGLAGGAATAGA), serve as a signal peptide directing secretion. 82–83 (LR) lines the substrate pocket. Residues 98–108 (FEWYYQSGLSI) are fibronectin-binding. Cysteines 127 and 132 form a disulfide. Substrate-binding residues include serine 166 and aspartate 194. The active-site Nucleophile is the serine 166. Residue glutamate 270 is part of the active site. Substrate-binding positions include 272–275 (FVRS), lysine 279, and 302–304 (HSW). Residue histidine 302 is part of the active site.

This sequence belongs to the mycobacterial A85 antigen family.

The protein localises to the secreted. It carries out the reaction 2 alpha,alpha'-trehalose 6-mycolate = alpha,alpha'-trehalose 6,6'-bismycolate + alpha,alpha-trehalose. The catalysed reaction is an acyl-CoA + a 1,2-diacyl-sn-glycerol = a triacyl-sn-glycerol + CoA. Its function is as follows. The antigen 85 proteins (FbpA, FbpB, FbpC) are responsible for the high affinity of mycobacteria for fibronectin, a large adhesive glycoprotein, which facilitates the attachment of M.tuberculosis to murine alveolar macrophages (AMs). They also help to maintain the integrity of the cell wall by catalyzing the transfer of mycolic acids to cell wall arabinogalactan and through the synthesis of alpha,alpha-trehalose dimycolate (TDM, cord factor). They catalyze the transfer of a mycoloyl residue from one molecule of alpha,alpha-trehalose monomycolate (TMM) to another TMM, leading to the formation of TDM. This Mycobacterium tuberculosis (strain ATCC 25177 / H37Ra) protein is Diacylglycerol acyltransferase/mycolyltransferase Ag85B (fbpB).